The sequence spans 183 residues: Translocon-associated protein subunit beta (183 aa).

An N-terminal signal peptide occupies residues 1–17; that stretch reads MRLLASVLLALFAVSHA. Residues 18–149 lie on the Lumenal side of the membrane; sequence EEGARLLASK…DRRFSPHFLD (132 aa). Residues Asn88 and Asn104 are each glycosylated (N-linked (GlcNAc...) asparagine). The helical transmembrane segment at 150-169 threads the bilayer; sequence WAAFGVMTLPSIGIPLLLWY. At 170 to 183 the chain is on the cytoplasmic side; it reads SSKRKYDTPKSKKN.

It belongs to the TRAP-beta family. As to quaternary structure, heterotetramer of TRAP-alpha, TRAP-beta, TRAP-delta and TRAP-gamma. Interacts with STING1.

The protein resides in the endoplasmic reticulum membrane. Its function is as follows. TRAP proteins are part of a complex whose function is to bind calcium to the ER membrane and thereby regulate the retention of ER resident proteins. This is Translocon-associated protein subunit beta (SSR2) from Canis lupus familiaris (Dog).